Consider the following 643-residue polypeptide: 1-deoxy-D-xylulose-5-phosphate synthase (643 aa).

Thiamine diphosphate contacts are provided by residues His-78 and 119–121 (AHS). A Mg(2+)-binding site is contributed by Asp-150. Residues 151–152 (GS), Asn-179, Tyr-288, and Glu-370 contribute to the thiamine diphosphate site. A Mg(2+)-binding site is contributed by Asn-179.

The protein belongs to the transketolase family. DXPS subfamily. As to quaternary structure, homodimer. Requires Mg(2+) as cofactor. The cofactor is thiamine diphosphate.

The catalysed reaction is D-glyceraldehyde 3-phosphate + pyruvate + H(+) = 1-deoxy-D-xylulose 5-phosphate + CO2. Its pathway is metabolic intermediate biosynthesis; 1-deoxy-D-xylulose 5-phosphate biosynthesis; 1-deoxy-D-xylulose 5-phosphate from D-glyceraldehyde 3-phosphate and pyruvate: step 1/1. Its function is as follows. Catalyzes the acyloin condensation reaction between C atoms 2 and 3 of pyruvate and glyceraldehyde 3-phosphate to yield 1-deoxy-D-xylulose-5-phosphate (DXP). This chain is 1-deoxy-D-xylulose-5-phosphate synthase, found in Brucella melitensis biotype 2 (strain ATCC 23457).